We begin with the raw amino-acid sequence, 38 residues long: Augerpeptide hhe53 (38 aa).

In terms of processing, contains 2 disulfide bonds. In terms of tissue distribution, expressed by the venom duct.

It localises to the secreted. The chain is Augerpeptide hhe53 from Hastula hectica (Sea snail).